Reading from the N-terminus, the 575-residue chain is Dihydroxy-acid dehydratase (575 aa).

Cysteine 64 provides a ligand contact to [2Fe-2S] cluster. Aspartate 96 is a Mg(2+) binding site. Cysteine 137 is a [2Fe-2S] cluster binding site. The Mg(2+) site is built by aspartate 138 and lysine 139. An N6-carboxylysine modification is found at lysine 139. Cysteine 214 is a [2Fe-2S] cluster binding site. Glutamate 465 is a binding site for Mg(2+). Serine 491 functions as the Proton acceptor in the catalytic mechanism.

It belongs to the IlvD/Edd family. In terms of assembly, homodimer. Requires [2Fe-2S] cluster as cofactor. Mg(2+) serves as cofactor.

The enzyme catalyses (2R)-2,3-dihydroxy-3-methylbutanoate = 3-methyl-2-oxobutanoate + H2O. It carries out the reaction (2R,3R)-2,3-dihydroxy-3-methylpentanoate = (S)-3-methyl-2-oxopentanoate + H2O. It participates in amino-acid biosynthesis; L-isoleucine biosynthesis; L-isoleucine from 2-oxobutanoate: step 3/4. It functions in the pathway amino-acid biosynthesis; L-valine biosynthesis; L-valine from pyruvate: step 3/4. In terms of biological role, functions in the biosynthesis of branched-chain amino acids. Catalyzes the dehydration of (2R,3R)-2,3-dihydroxy-3-methylpentanoate (2,3-dihydroxy-3-methylvalerate) into 2-oxo-3-methylpentanoate (2-oxo-3-methylvalerate) and of (2R)-2,3-dihydroxy-3-methylbutanoate (2,3-dihydroxyisovalerate) into 2-oxo-3-methylbutanoate (2-oxoisovalerate), the penultimate precursor to L-isoleucine and L-valine, respectively. In Mycobacterium bovis (strain ATCC BAA-935 / AF2122/97), this protein is Dihydroxy-acid dehydratase.